A 698-amino-acid chain; its full sequence is Polyribonucleotide nucleotidyltransferase (698 aa).

Residues aspartate 487 and aspartate 493 each contribute to the Mg(2+) site. The KH domain occupies 555-614; the sequence is PKIIQIQIDPQKIGDVVGQRGKTINAIIEQTGVKIDINDEGAVSVCGTDKDMMDKAINMI. Residues 624–692 form the S1 motif domain; that stretch reads GQVFEGKVIS…KMGRISFSIK (69 aa).

This sequence belongs to the polyribonucleotide nucleotidyltransferase family. It depends on Mg(2+) as a cofactor.

It localises to the cytoplasm. The enzyme catalyses RNA(n+1) + phosphate = RNA(n) + a ribonucleoside 5'-diphosphate. In terms of biological role, involved in mRNA degradation. Catalyzes the phosphorolysis of single-stranded polyribonucleotides processively in the 3'- to 5'-direction. The sequence is that of Polyribonucleotide nucleotidyltransferase from Lachnoclostridium phytofermentans (strain ATCC 700394 / DSM 18823 / ISDg) (Clostridium phytofermentans).